Here is a 433-residue protein sequence, read N- to C-terminus: Chaperone SurA (433 aa).

A signal peptide spans 1 to 24; the sequence is MDGIKLLLSIIILYFYTYINCAIA. PpiC domains are found at residues 173–274 and 285–385; these read NTTF…KVHD and ITEV…QLQN.

It localises to the periplasm. The enzyme catalyses [protein]-peptidylproline (omega=180) = [protein]-peptidylproline (omega=0). In terms of biological role, chaperone involved in the correct folding and assembly of outer membrane proteins. Recognizes specific patterns of aromatic residues and the orientation of their side chains, which are found more frequently in integral outer membrane proteins. May act in both early periplasmic and late outer membrane-associated steps of protein maturation. In Baumannia cicadellinicola subsp. Homalodisca coagulata, this protein is Chaperone SurA.